A 168-amino-acid polypeptide reads, in one-letter code: Group 2 truncated hemoglobin 3-1 (168 aa).

Histidine 98 contributes to the heme b binding site.

This sequence belongs to the truncated hemoglobin family. Group II subfamily. Homodimer when ferric. Mainly expressed in root nodules, but barely in leaves, roots, stems, flowers and fruits.

Its function is as follows. Hemoglobin-like protein that exhibits an unusual concentration-independent binding of O(2) and CO. Required for general plant development and during nodulation. May promote shoot organogenesis from root explants. This chain is Group 2 truncated hemoglobin 3-1, found in Lotus japonicus (Lotus corniculatus var. japonicus).